Here is a 151-residue protein sequence, read N- to C-terminus: MD-2-related lipid-recognition protein (151 aa).

A signal peptide spans 1–18; it reads MAALHWLLLAALLGCTLA. 3 cysteine pairs are disulfide-bonded: C27–C141, C45–C51, and C95–C100. A glycan (N-linked (GlcNAc...) asparagine) is linked at N58.

In terms of processing, N-glycosylated. As to expression, hemolymph (at protein level). Constitutively expressed mainly in fat body and also in hemocytes and secreted into hemolymph. Not detected in midgut, epidermis, or Malpighian tubule of naive larvae.

Its subcellular location is the secreted. Its function is as follows. Binds to lipopolysaccharide from a variety of Gram-negative bacteria and to lipid A. This Manduca sexta (Tobacco hawkmoth) protein is MD-2-related lipid-recognition protein.